We begin with the raw amino-acid sequence, 443 residues long: Tol-Pal system protein TolB (443 aa).

An N-terminal signal peptide occupies residues 1-33 (MKIGIINTKIRTVFSAFACMIAASLVCTMPARA).

This sequence belongs to the TolB family. In terms of assembly, the Tol-Pal system is composed of five core proteins: the inner membrane proteins TolA, TolQ and TolR, the periplasmic protein TolB and the outer membrane protein Pal. They form a network linking the inner and outer membranes and the peptidoglycan layer.

It localises to the periplasm. Its function is as follows. Part of the Tol-Pal system, which plays a role in outer membrane invagination during cell division and is important for maintaining outer membrane integrity. The sequence is that of Tol-Pal system protein TolB from Brucella melitensis biotype 1 (strain ATCC 23456 / CCUG 17765 / NCTC 10094 / 16M).